The primary structure comprises 77 residues: U8-lycotoxin-Ls1m (77 aa).

The first 20 residues, Met1–Ala20, serve as a signal peptide directing secretion. A propeptide spanning residues Gln21 to Lys26 is cleaved from the precursor.

The protein belongs to the neurotoxin 19 (CSTX) family. 08 (U8-Lctx) subfamily. Contains 4 disulfide bonds. In terms of tissue distribution, expressed by the venom gland.

It localises to the secreted. The protein is U8-lycotoxin-Ls1m of Lycosa singoriensis (Wolf spider).